Here is a 386-residue protein sequence, read N- to C-terminus: TRIBOA-glucoside O-methyltransferase BX7 (386 aa).

The S-adenosyl-L-methionine site is built by G224, D248, M270, and K283. H287 serves as the catalytic Proton acceptor.

The protein belongs to the class I-like SAM-binding methyltransferase superfamily. Cation-independent O-methyltransferase family. COMT subfamily. Expressed in seedlings and newly formed crown roots. Highest expression in the scutellar node. Low to non detectable levels in cob, tassel and mature organs like husk or leaves.

The enzyme catalyses TRIBOA beta-D-glucoside + S-adenosyl-L-methionine = DIMBOA beta-D-glucoside + S-adenosyl-L-homocysteine + H(+). In terms of biological role, O-methyltransferase involved in the benzoxazinoid glucoside biosynthesis. Can use 2,4,7-trihydroxy-2H-1,4-benzoxazin-3(4H)-one 2-D-glucoside (TRIBOA-glucoside) as substrate, but not aglucone TRIBOA, caffeic acid, ferulic acid, apigenin or quercetin. The sequence is that of TRIBOA-glucoside O-methyltransferase BX7 (BX7) from Zea mays (Maize).